The following is a 163-amino-acid chain: Cytochrome c-type biogenesis protein CcmE (163 aa).

The Cytoplasmic portion of the chain corresponds to 1–8 (MNPRRKKR). The helical; Signal-anchor for type II membrane protein transmembrane segment at 9–29 (LTIILAISAGLAAVIGLVLYA) threads the bilayer. Residues 30–163 (LSQNIDLFYT…TEAQLKGAKQ (134 aa)) are Periplasmic-facing. Residues His131 and Tyr135 each contribute to the heme site.

The protein belongs to the CcmE/CycJ family.

The protein localises to the cell inner membrane. Its function is as follows. Heme chaperone required for the biogenesis of c-type cytochromes. Transiently binds heme delivered by CcmC and transfers the heme to apo-cytochromes in a process facilitated by CcmF and CcmH. The polypeptide is Cytochrome c-type biogenesis protein CcmE (Aeromonas salmonicida (strain A449)).